Here is a 381-residue protein sequence, read N- to C-terminus: tRNA pseudouridine synthase D (381 aa).

The Nucleophile role is filled by Asp81. Positions 160-335 (GMPNYFGPQR…TLGSRRFFWV (176 aa)) constitute a TRUD domain.

The protein belongs to the pseudouridine synthase TruD family.

It carries out the reaction uridine(13) in tRNA = pseudouridine(13) in tRNA. Its function is as follows. Responsible for synthesis of pseudouridine from uracil-13 in transfer RNAs. The sequence is that of tRNA pseudouridine synthase D from Helicobacter pylori (strain Shi470).